A 562-amino-acid polypeptide reads, in one-letter code: NAD-dependent malic enzyme (562 aa).

Catalysis depends on Tyr-101, which acts as the Proton donor. Position 154 (Arg-154) interacts with NAD(+). The Proton acceptor role is filled by Lys-172. Residues Glu-243, Asp-244, and Asp-267 each coordinate a divalent metal cation. Positions 267 and 415 each coordinate NAD(+).

Belongs to the malic enzymes family. Homotetramer. Mg(2+) serves as cofactor. It depends on Mn(2+) as a cofactor.

The enzyme catalyses (S)-malate + NAD(+) = pyruvate + CO2 + NADH. It catalyses the reaction oxaloacetate + H(+) = pyruvate + CO2. This is NAD-dependent malic enzyme from Shewanella putrefaciens (strain CN-32 / ATCC BAA-453).